An 89-amino-acid polypeptide reads, in one-letter code: Small ribosomal subunit protein uS15 (89 aa).

It belongs to the universal ribosomal protein uS15 family. Part of the 30S ribosomal subunit. Forms a bridge to the 50S subunit in the 70S ribosome, contacting the 23S rRNA.

One of the primary rRNA binding proteins, it binds directly to 16S rRNA where it helps nucleate assembly of the platform of the 30S subunit by binding and bridging several RNA helices of the 16S rRNA. Functionally, forms an intersubunit bridge (bridge B4) with the 23S rRNA of the 50S subunit in the ribosome. This Chlamydia felis (strain Fe/C-56) (Chlamydophila felis) protein is Small ribosomal subunit protein uS15.